The following is a 231-amino-acid chain: Endo-1,4-beta-xylanase A (231 aa).

Residues 1-19 (MVSFKSLLVAVSALTGALA) form the signal peptide. N-linked (GlcNAc...) asparagine glycosylation occurs at Asn32. Positions 41–229 (QVTGNSEGYH…SSGSSSIYVQ (189 aa)) constitute a GH11 domain. The active-site Nucleophile is Glu125. Glu216 serves as the catalytic Proton donor.

The protein belongs to the glycosyl hydrolase 11 (cellulase G) family.

It is found in the secreted. It catalyses the reaction Endohydrolysis of (1-&gt;4)-beta-D-xylosidic linkages in xylans.. The protein operates within glycan degradation; xylan degradation. Its activity is regulated as follows. Inhibited by the proteinaceous endoxylanase inhibitor I from T.aestivum (TAXI-I). Endo-1,4-beta-xylanase involved in the hydrolysis of xylan, a major structural heterogeneous polysaccharide found in plant biomass representing the second most abundant polysaccharide in the biosphere, after cellulose. Plays an important role in causing fusarium head blight (FHB) on cereal crops. In Gibberella zeae (strain ATCC MYA-4620 / CBS 123657 / FGSC 9075 / NRRL 31084 / PH-1) (Wheat head blight fungus), this protein is Endo-1,4-beta-xylanase A (XYLA).